Consider the following 178-residue polypeptide: Acireductone dioxygenase (178 aa).

Fe(2+) contacts are provided by His100, His102, Glu106, and His145. Ni(2+) is bound by residues His100, His102, Glu106, and His145.

Belongs to the acireductone dioxygenase (ARD) family. Monomer. It depends on Fe(2+) as a cofactor. Ni(2+) is required as a cofactor.

The enzyme catalyses 1,2-dihydroxy-5-(methylsulfanyl)pent-1-en-3-one + O2 = 3-(methylsulfanyl)propanoate + CO + formate + 2 H(+). The catalysed reaction is 1,2-dihydroxy-5-(methylsulfanyl)pent-1-en-3-one + O2 = 4-methylsulfanyl-2-oxobutanoate + formate + 2 H(+). Its pathway is amino-acid biosynthesis; L-methionine biosynthesis via salvage pathway; L-methionine from S-methyl-5-thio-alpha-D-ribose 1-phosphate: step 5/6. Functionally, catalyzes 2 different reactions between oxygen and the acireductone 1,2-dihydroxy-3-keto-5-methylthiopentene (DHK-MTPene) depending upon the metal bound in the active site. Fe-containing acireductone dioxygenase (Fe-ARD) produces formate and 2-keto-4-methylthiobutyrate (KMTB), the alpha-ketoacid precursor of methionine in the methionine recycle pathway. Ni-containing acireductone dioxygenase (Ni-ARD) produces methylthiopropionate, carbon monoxide and formate, and does not lie on the methionine recycle pathway. The polypeptide is Acireductone dioxygenase (Bacillus velezensis (strain DSM 23117 / BGSC 10A6 / LMG 26770 / FZB42) (Bacillus amyloliquefaciens subsp. plantarum)).